Reading from the N-terminus, the 327-residue chain is Aspartate--ammonia ligase (327 aa).

The protein belongs to the class-II aminoacyl-tRNA synthetase family. AsnA subfamily.

The protein resides in the cytoplasm. It catalyses the reaction L-aspartate + NH4(+) + ATP = L-asparagine + AMP + diphosphate + H(+). It functions in the pathway amino-acid biosynthesis; L-asparagine biosynthesis; L-asparagine from L-aspartate (ammonia route): step 1/1. This Bacillus cereus (strain G9842) protein is Aspartate--ammonia ligase.